The sequence spans 329 residues: Stimulator of interferon genes protein (329 aa).

The Cytoplasmic portion of the chain corresponds to 1 to 4 (MACV). A helical transmembrane segment spans residues 5–25 (LAIGSILFVWILGKGKYSGAQ). Position 26 (Leu26) is a topological domain, lumenal. A helical transmembrane segment spans residues 27–52 (IYRMATNFAISQGCCLVTCACELTEE). Over 53–74 (IKHLHTRYNGHYWRALKASFNL) the chain is Cytoplasmic. The chain crosses the membrane as a helical span at residues 75 to 88 (SCAAFVTAILCYVF). At 89 to 98 (YEPKLMASLP) the chain is on the lumenal side. A helical transmembrane segment spans residues 99–116 (LTIDITLTLLSWLFCWIL). The Cytoplasmic portion of the chain corresponds to 117–329 (GIQGPTPATI…QQHSEEYSML (213 aa)). The tract at residues 135-325 (LNVAHGLAWS…KHIRQQHSEE (191 aa)) is cyclic dinucleotide-binding domain (CBD). Residues Ser144, Tyr149, Arg220, and Thr245 each coordinate 2',3'-cGAMP. 3',3'-c-di-GMP is bound by residues Ser144, Tyr149, 220–223 (RVFK), and Thr245.

The protein belongs to the STING family. In terms of assembly, homodimer; forms a homodimer in absence of cyclic nucleotide (c-di-GMP or cGAMP). Homotetramer; in presence of cyclic nucleotide (c-di-GMP or cGAMP), forms tetramers and higher-order oligomers through side-by-side packing.

It localises to the endoplasmic reticulum membrane. The protein resides in the cytoplasm. It is found in the perinuclear region. The protein localises to the endoplasmic reticulum-Golgi intermediate compartment membrane. Its subcellular location is the golgi apparatus membrane. It localises to the cytoplasmic vesicle. The protein resides in the autophagosome membrane. The catalysed reaction is H(+)(in) = H(+)(out). In terms of biological role, sensor of cytosolic DNA from bacteria and viruses that promotes autophagy. Acts by recognizing and binding cyclic GMP-AMP (cGAMP), a messenger produced by CGAS in response to DNA in the cytosol. Exhibits guanine base-specific ligand recognition: binds 3'-3'linked cGAMP, 2'-3' linked cGAMP and 3'-3' linked c-di-GMP with much greater affinity as compared to 3'-3' linked c-di-AMP. Following cGAMP-binding, promotes the formation of autophagosomes, leading to target cytosolic DNA for degradation by the lysosome. Promotes autophagy by acting as a proton channel that directs proton efflux from the Golgi to facilitate LC3 lipidation. Lacks the C-terminal tail (CTT) found in other vertebrate orthologs which is essential for interferon signaling. The sequence is that of Stimulator of interferon genes protein from Xenopus tropicalis (Western clawed frog).